Reading from the N-terminus, the 370-residue chain is Dihydrolipoyllysine-residue acetyltransferase component of acetoin cleaving system (370 aa).

The 76-residue stretch at 4 to 79 folds into the Lipoyl-binding domain; that stretch reads IHTLTMPKWG…PVGALLAVVV (76 aa). Lys45 is modified (N6-lipoyllysine). In terms of domain architecture, AB hydrolase-1 spans 135-355; sequence PLVLVHGFGG…EAGHMVQMEA (221 aa).

It depends on (R)-lipoate as a cofactor.

The enzyme catalyses N(6)-[(R)-dihydrolipoyl]-L-lysyl-[protein] + acetyl-CoA = N(6)-[(R)-S(8)-acetyldihydrolipoyl]-L-lysyl-[protein] + CoA. It functions in the pathway ketone degradation; acetoin degradation. This is Dihydrolipoyllysine-residue acetyltransferase component of acetoin cleaving system (acoC) from Pseudomonas putida (Arthrobacter siderocapsulatus).